A 192-amino-acid polypeptide reads, in one-letter code: Holliday junction branch migration complex subunit RuvA (192 aa).

A domain I region spans residues 1 to 61; sequence MFEYLKGIVT…DTGITLYGFL (61 aa). The domain II stretch occupies residues 62-137; the sequence is SLEDKELFLK…KLGDYVKKST (76 aa). The interval 137 to 140 is flexible linker; sequence TAAA. The segment at 141–192 is domain III; that stretch reads DLTPSLQDALLALVALGYTQKEVDRITPKLAKLPENTADGYVKEALALLLKK.

The protein belongs to the RuvA family. Homotetramer. Forms an RuvA(8)-RuvB(12)-Holliday junction (HJ) complex. HJ DNA is sandwiched between 2 RuvA tetramers; dsDNA enters through RuvA and exits via RuvB. An RuvB hexamer assembles on each DNA strand where it exits the tetramer. Each RuvB hexamer is contacted by two RuvA subunits (via domain III) on 2 adjacent RuvB subunits; this complex drives branch migration. In the full resolvosome a probable DNA-RuvA(4)-RuvB(12)-RuvC(2) complex forms which resolves the HJ.

Its subcellular location is the cytoplasm. The RuvA-RuvB-RuvC complex processes Holliday junction (HJ) DNA during genetic recombination and DNA repair, while the RuvA-RuvB complex plays an important role in the rescue of blocked DNA replication forks via replication fork reversal (RFR). RuvA specifically binds to HJ cruciform DNA, conferring on it an open structure. The RuvB hexamer acts as an ATP-dependent pump, pulling dsDNA into and through the RuvAB complex. HJ branch migration allows RuvC to scan DNA until it finds its consensus sequence, where it cleaves and resolves the cruciform DNA. The sequence is that of Holliday junction branch migration complex subunit RuvA from Lactobacillus johnsonii (strain CNCM I-12250 / La1 / NCC 533).